A 288-amino-acid polypeptide reads, in one-letter code: Lysosomal thioesterase PPT2-B (288 aa).

An N-terminal signal peptide occupies residues 1 to 20 (MRGYLLLLPLLLCLVDNSVS). C95 and C103 are oxidised to a cystine. The Nucleophile role is filled by S97. N143 carries an N-linked (GlcNAc...) asparagine glycan. C151 and C162 are disulfide-bonded. An N-linked (GlcNAc...) asparagine glycan is attached at N192. Catalysis depends on residues D214 and H269. N275 carries an N-linked (GlcNAc...) asparagine glycan.

It belongs to the palmitoyl-protein thioesterase family.

The protein resides in the lysosome. The catalysed reaction is hexadecanoyl-CoA + H2O = hexadecanoate + CoA + H(+). It carries out the reaction S-hexadecanoyl-N-acetylcysteamine + H2O = N-acetylcysteamine + hexadecanoate + H(+). Catalyzes the cleavage of thioester bonds from S-palmitoyl-CoA or S-palmitoyl-N-acetylcysteamine (unbranched structures) but does not have activity against palmitoylcysteine or palmitoylated proteins, branched structures or bulky head groups. Conversely, hydrolyzes both long and short chain fatty acyl-CoA substrate. This chain is Lysosomal thioesterase PPT2-B (ppt2-b), found in Xenopus laevis (African clawed frog).